We begin with the raw amino-acid sequence, 553 residues long: L-aspartate oxidase (553 aa).

FAD-binding positions include 13-16, Lys-35, 42-49, and Asp-208; these read SGAA and ASDWAQGG. Arg-275 acts as the Proton donor/acceptor in catalysis. FAD-binding positions include Glu-364 and 380–381; that span reads SL.

This sequence belongs to the FAD-dependent oxidoreductase 2 family. NadB subfamily. The cofactor is FAD.

It is found in the cytoplasm. It catalyses the reaction L-aspartate + O2 = iminosuccinate + H2O2. It participates in cofactor biosynthesis; NAD(+) biosynthesis; iminoaspartate from L-aspartate (oxidase route): step 1/1. Functionally, catalyzes the oxidation of L-aspartate to iminoaspartate, the first step in the de novo biosynthesis of NAD(+). This Synechocystis sp. (strain ATCC 27184 / PCC 6803 / Kazusa) protein is L-aspartate oxidase (nadB).